The sequence spans 302 residues: Urease accessory protein UreG (302 aa).

3 stretches are compositionally biased toward basic and acidic residues: residues 1 to 32 (MHDP…DHVH), 40 to 56 (HEHE…EHGH), and 64 to 76 (HAHE…THEH). The segment at 1 to 76 (MHDPGEHGHG…EHAHGHTHEH (76 aa)) is disordered. 105 to 112 (GPVGSGKT) provides a ligand contact to GTP.

This sequence belongs to the SIMIBI class G3E GTPase family. UreG subfamily. Homodimer. UreD, UreF and UreG form a complex that acts as a GTP-hydrolysis-dependent molecular chaperone, activating the urease apoprotein by helping to assemble the nickel containing metallocenter of UreC. The UreE protein probably delivers the nickel.

It is found in the cytoplasm. Facilitates the functional incorporation of the urease nickel metallocenter. This process requires GTP hydrolysis, probably effectuated by UreG. The sequence is that of Urease accessory protein UreG from Sorangium cellulosum (strain So ce56) (Polyangium cellulosum (strain So ce56)).